The primary structure comprises 923 residues: MNRRDFIKNTAIASAASVAGLSVPSSMLGAQEDWKWDKAVCRFCGTGCGIMIARKDGKIVATKGDPAAPVNRGLNCIKGYFNAKIMYGEDRLVMPLLRMNEKGEFDKKGKFQQVSWQRAFDEMEKQFKKAYNELGVTGIGIFGSGQYTIQEGYAALKLAKAGFRTNNIDPNARHCMASAVVGFMQTFGVDEPSGCYDDIELTDTIITWGANMAEMHPILWSRVSDRKLSNLDKVKVVNLSTFSNRTSNIADIEIIFKPNTDLAIWNYIAREIVYNHPEAMDMKFIKDHCVFATGYADIGYGMRNNPNHPKFKESEKDTVEKENVITLDDEEAASLSYLGVKAGDKFEMKHQGVADKNWEISFEEFKKGLAPYTLEYTAKVAKGDDNESLEDFKKKLQELANLYIEKNRKVVSFWTMGFNQHTRGSWVNEQAYMVHFLLGKQAKPGSGAFSLTGQPSACGTAREVGTFSHRLPADMVVANPKHREISEKIWKVPAKTINPKPGSPYLNIMRDLEDGKIKFAWVQVNNPWQNTANANHWIAAAREMDNFIVVSDCYPGISAKVADLILPSAMIYEKWGAYGNAERRTQHWKQQVLPVGAAMSDTWQILEFAKRFKLKEVWKEQKVDNKLTLPSVLEEAKAMGYSEDDTLFDVLFANKEAKSFNPNDAIAKGFDNTDVKGDERKIQGSDGKEFTGYGFFVQKYLWEEYRKFGLGHGHDLADFDTYHKVRGLRWPVVNGKETQWRFNTKFDYYAKKAAPNSDFAFYGDFNKMLTNGDLIAPKDEKEHSIKNKAKIFFRPFMKAPERPSKEYPFWLATGRVLEHWHSGTMTMRVPELYRAVPEALCYMSEKDGEKLGLNQGDLVWVESRRGKVKARVDMRGRNKPPVGLVYVPWFDENVYINKVTLDATCPLSKQTDFKKCAVKIYKA.

The tat-type signal signal peptide spans 1 to 30 (MNRRDFIKNTAIASAASVAGLSVPSSMLGA). The 4Fe-4S Mo/W bis-MGD-type domain occupies 34–90 (WKWDKAVCRFCGTGCGIMIARKDGKIVATKGDPAAPVNRGLNCIKGYFNAKIMYGED). 4 residues coordinate [4Fe-4S] cluster: Cys-41, Cys-44, Cys-48, and Cys-76. Residues Lys-78, Gln-146, Asn-171, Cys-175, 208-215 (WGANMAEM), Met-416, Gln-420, Asn-526, 551-552 (SD), Lys-574, Asp-601, and 813-822 (TGRVLEHWHS) each bind Mo-bis(molybdopterin guanine dinucleotide). Position 889 (Trp-889) interacts with substrate. Positions 897 and 914 each coordinate Mo-bis(molybdopterin guanine dinucleotide).

Belongs to the prokaryotic molybdopterin-containing oxidoreductase family. NasA/NapA/NarB subfamily. Component of the periplasmic nitrate reductase NapAB complex composed of NapA and NapB. [4Fe-4S] cluster is required as a cofactor. It depends on Mo-bis(molybdopterin guanine dinucleotide) as a cofactor. Predicted to be exported by the Tat system. The position of the signal peptide cleavage has not been experimentally proven.

It is found in the periplasm. The enzyme catalyses 2 Fe(II)-[cytochrome] + nitrate + 2 H(+) = 2 Fe(III)-[cytochrome] + nitrite + H2O. Its function is as follows. Catalytic subunit of the periplasmic nitrate reductase complex NapAB. Receives electrons from NapB and catalyzes the reduction of nitrate to nitrite. This Campylobacter jejuni subsp. jejuni serotype O:23/36 (strain 81-176) protein is Periplasmic nitrate reductase.